The sequence spans 481 residues: Subtilisin-like protease 1 (481 aa).

The N-terminal stretch at 1–19 (MGVFRFISISLAAVSAANA) is a signal peptide. Residues 20–116 (AQILSMPHAQ…VEPDTIISVH (97 aa)) constitute a propeptide that is removed on maturation. The region spanning 34 to 115 (SYIVMMKDDT…FVEPDTIISV (82 aa)) is the Inhibitor I9 domain. Positions 126-400 (SWGLARISSS…NVLINNGGAK (275 aa)) constitute a Peptidase S8 domain. Catalysis depends on charge relay system residues Asp-158 and His-190. The interval 175 to 198 (GSNQVNDGDDNDRSGHGTHTSGTM) is disordered. An N-linked (GlcNAc...) asparagine glycan is attached at Asn-251. Positions 281–312 (GNDNTDARSSSPASEPSVCTVGASAEDDSRSS) are disordered. The segment covering 282 to 294 (NDNTDARSSSPAS) has biased composition (polar residues). Ser-345 (charge relay system) is an active-site residue. The disordered stretch occupies residues 379 to 455 (ASISDVGPGT…HPHTPFPGGD (77 aa)). The segment covering 424 to 450 (PQQPAPGEPSTPAPAPMPPTPQHPHTP) has biased composition (pro residues).

This sequence belongs to the peptidase S8 family.

The protein resides in the secreted. Secreted subtilisin-like serine protease with keratinolytic activity that contributes to pathogenicity. The sequence is that of Subtilisin-like protease 1 (SUB1) from Arthroderma gypseum (strain ATCC MYA-4604 / CBS 118893) (Microsporum gypseum).